Reading from the N-terminus, the 360-residue chain is DNA replication and repair protein RecF (360 aa).

33–40 provides a ligand contact to ATP; sequence GENGSGKT.

This sequence belongs to the RecF family.

It is found in the cytoplasm. Functionally, the RecF protein is involved in DNA metabolism; it is required for DNA replication and normal SOS inducibility. RecF binds preferentially to single-stranded, linear DNA. It also seems to bind ATP. The sequence is that of DNA replication and repair protein RecF from Rickettsia typhi (strain ATCC VR-144 / Wilmington).